Consider the following 476-residue polypeptide: Protein EARLY HEADING DATE 2 (476 aa).

Residues 1–13 (MLLSDLSSDQEAT) show a composition bias toward polar residues. The interval 1–27 (MLLSDLSSDQEATGSNSHGGGGGGDRM) is disordered. 2 C2H2-type zinc fingers span residues 106–128 (FVCE…RRGH) and 156–186 (YVCP…SRKH). 2 consecutive short sequence motifs (nuclear localization signal) follow at residues 124–131 (HRRGHNLP) and 178–185 (IKKHFSRK). Residues 191–214 (WRCERCGKRYAVHSDWKAHVKNCG) form a C2H2-type 2; degenerate zinc finger. 8 residues coordinate Zn(2+): C193, C196, H209, C213, C220, C222, H235, and C239. The CCHC-type 2; atypical zinc-finger motif lies at 218-241 (YRCDCGILFSRKDSLLTHRAFCDA). Positions 228–240 (RKDSLLTHRAFCD) are SHR-binding.

Its subcellular location is the nucleus. In terms of biological role, transcription activator that acts as a flowering master switch in both long and short days, independently of the circadian clock. Promotes flowering upstream of HD1 by up-regulating FTL1, FTL4, FTL5, FTL6, EHD1, HD3A and RFT1. Seems to repress FTL11 expression. May recognize the consensus motif 5'-TTTGTCGTAAT-3' in target gene promoters. This Oryza sativa subsp. indica (Rice) protein is Protein EARLY HEADING DATE 2.